A 659-amino-acid polypeptide reads, in one-letter code: Serine/threonine-protein kinase StkP (659 aa).

Residues 1–342 (MIQIGKIFAG…PQAPKKHRFK (342 aa)) lie on the Cytoplasmic side of the membrane. Positions 12–273 (YRIVKQIGRG…EMYVDLSSSL (262 aa)) constitute a Protein kinase domain. ATP contacts are provided by residues 18–26 (IGRGGMADV) and lysine 42. Aspartate 136 functions as the Proton acceptor in the catalytic mechanism. Residues 343–363 (MRYLILLASLVLVAASLIWIL) form a helical membrane-spanning segment. Residues 364–659 (SRSPATIAIP…YKPKTTSATP (296 aa)) lie on the Periplasmic side of the membrane. 4 PASTA domains span residues 366 to 433 (SPAT…VVSS), 434 to 505 (GKQS…TVAK), 506 to 577 (KATT…TVAK), and 578 to 651 (KVTS…SIYK). Residues 541-561 (EEESSESEPGTIMKQSPGAGT) are disordered.

It belongs to the protein kinase superfamily. Ser/Thr protein kinase family. In terms of assembly, homodimer. StkP forms dimers through its transmembrane and extracellular domains. Dimer formation likely promotes autophosphorylation activity and might be necessary for targeting StkP substrate. Interacts with PhpP via its kinase domain. Autophosphorylation occurs predominantly on threonine residue(s) and weakly on serine residue(s). Dephosphorylated by PhpP.

The protein localises to the cell membrane. The catalysed reaction is L-seryl-[protein] + ATP = O-phospho-L-seryl-[protein] + ADP + H(+). The enzyme catalyses L-threonyl-[protein] + ATP = O-phospho-L-threonyl-[protein] + ADP + H(+). Its activity is regulated as follows. StkP is activated continuously during growth and its activity is inhibited upon growth arrest. Inhibited by staurosporine, a known protein kinase inhibitor. Protein kinase involved in signal transduction pathways that regulate various cellular processes. Likely senses intracellular peptidoglycan subunits present in the cell division septa of actively growing cells; thus, intracellular unlinked peptidoglycan may serve as the signal molecules that trigger StkP phosphorylation activity on a set of substrates. Plays a crucial role in the regulation of cell shape and cell division of S.pneumoniae through control of at least DivIVA activity. Is involved in competence triggering, via the transduction of signals culminating directly or indirectly in ComD activation. Is important for the resistance of S.pneumoniae to various environmental stress conditions. Appears to be a global regulator that positively controls the transcription of a set of genes encoding functions involved in cell wall metabolism, pyrimidine biosynthesis, DNA repair, iron uptake, and oxidative stress response, and that seems to down-regulate genes employed in competence. Since StkP is unlikely to directly regulate transcription, the input signal must be transmitted through an effector molecule. Identified target substrates that are specifically phosphorylated by StkP in vivo, mainly on threonine residues, are DivIVA, GlmM, PpaC, MapZ, KhpB (also called EloR/Jag) and StkP itself. Autophosphorylated StkP is a substrate for the cotranscribed protein phosphatase PhpP; PhpP and StkP appear to constitute a functional signaling couple in vivo. This is Serine/threonine-protein kinase StkP (stkP) from Streptococcus pneumoniae.